The primary structure comprises 258 residues: Glutamate racemase (258 aa).

Substrate-binding positions include 12-13 and 44-45; these read DS and YG. Cys75 serves as the catalytic Proton donor/acceptor. 76 to 77 serves as a coordination point for substrate; it reads NT. Residue Cys186 is the Proton donor/acceptor of the active site. 187 to 188 contacts substrate; the sequence is TH.

This sequence belongs to the aspartate/glutamate racemases family.

The enzyme catalyses L-glutamate = D-glutamate. It participates in cell wall biogenesis; peptidoglycan biosynthesis. Provides the (R)-glutamate required for cell wall biosynthesis. In Clostridium botulinum (strain Alaska E43 / Type E3), this protein is Glutamate racemase.